The primary structure comprises 837 residues: Striatin-interacting protein 1 (837 aa).

M1 carries the post-translational modification N-acetylmethionine. A disordered region spans residues 1–67 (MEPAAGTPGP…DSEGYSESPD (67 aa)). Positions 18–35 (PQPPPPPPPATAQPPPGA) are enriched in pro residues. Over residues 47 to 60 (KAREFNRNQRKDSE) the composition is skewed to basic and acidic residues. Phosphoserine occurs at positions 59, 335, and 339. A disordered region spans residues 336-423 (PPASASDLIE…DRLTCPKGLP (88 aa)). The span at 356–377 (KALIKQDNLDAFNERDPYKADD) shows a compositional bias: basic and acidic residues. Residues 378 to 391 (SREEEEENDDDNSL) show a composition bias toward acidic residues. S788 is subject to Phosphoserine. The interval 796–837 (DNCLQSVLGQRVDLPEDFQMNYDLWLEREVFSKPISWEELLQ) is required for STRIPAK core complex formation.

It belongs to the STRIP family. Part of the core of STRIPAK complexes composed of PP2A catalytic and scaffolding subunits, the striatins (PP2A regulatory subunits), the striatin-associated proteins MOB4, STRIP1 and STRIP2, PDCD10 and members of the STE20 kinases, such as STK24 and STK26. The STRIPAK complex can be extended by adapter proteins such as SLMAP:SIKE1, CTTNBP2 or CTTNBP2NL. Interacts with CDC42BPB. Interacts with CTTNBP2NL.

It is found in the cytoplasm. In terms of biological role, plays a role in the regulation of cell morphology and cytoskeletal organization. Required in the cortical actin filament dynamics and cell shape. Part of the striatin-interacting phosphatase and kinase (STRIPAK) complexes. STRIPAK complexes have critical roles in protein (de)phosphorylation and are regulators of multiple signaling pathways including Hippo, MAPK, nuclear receptor and cytoskeleton remodeling. Different types of STRIPAK complexes are involved in a variety of biological processes such as cell growth, differentiation, apoptosis, metabolism and immune regulation. In Bos taurus (Bovine), this protein is Striatin-interacting protein 1 (STRIP1).